The following is a 309-amino-acid chain: Wall-associated proteinase (309 aa).

N190 and N295 each carry an N-linked (GlcNAc...) asparagine glycan.

Its subcellular location is the secreted. The protein resides in the cell wall. The protein localises to the membrane. Its function is as follows. May participate in wall plasticization and/or intussusception or in cell wall turnover. The polypeptide is Wall-associated proteinase (Coccidioides posadasii (strain RMSCC 757 / Silveira) (Valley fever fungus)).